A 460-amino-acid chain; its full sequence is CWF19-like protein 2 homolog (460 aa).

Disordered stretches follow at residues 38–78, 103–175, and 193–227; these read GKTF…EDEK, KLES…TGTA, and RRHDDESVDDIAEMQKGKKKSDEKDKKRKEKESIK. The span at 54 to 68 shows a compositional bias: polar residues; sequence GSQQVRNDVMKSSDS. Residues 84–106 adopt a coiled-coil conformation; that stretch reads KILKAEMKGDTDLVKKLKRKLES. Composition is skewed to basic and acidic residues over residues 113–131, 139–172, and 205–227; these read EPPKSKSKEVTMMRRDREG, RRSDSDRHGEGSSRMRREYEKSQDLDSMVREEKT, and EMQKGKKKSDEKDKKRKEKESIK. The stretch at 210 to 231 forms a coiled coil; it reads KKKSDEKDKKRKEKESIKEHKR.

Belongs to the CWF19 family.

In Caenorhabditis elegans, this protein is CWF19-like protein 2 homolog.